The following is a 297-amino-acid chain: Phosphatidylinositol N-acetylglucosaminyltransferase subunit C (297 aa).

4 helical membrane-spanning segments follow: residues 67–87 (VFVV…WLFG), 88–108 (TGLA…GGEG), 153–173 (AVFM…AAIV), and 239–259 (ALGG…LLLI).

This sequence belongs to the PIGC family. In terms of assembly, component of the glycosylphosphatidylinositol-N-acetylglucosaminyltransferase (GPI-GnT) complex composed at least by PIGA, PIGC, PIGH, PIGP, PIGQ, PIGY and DPM2. Interacts with PIGQ. Interacts with the heterodimer PIGA:PIGH.

The protein resides in the endoplasmic reticulum membrane. The protein operates within glycolipid biosynthesis; glycosylphosphatidylinositol-anchor biosynthesis. Its function is as follows. Part of the glycosylphosphatidylinositol-N-acetylglucosaminyltransferase (GPI-GnT) complex that catalyzes the transfer of N-acetylglucosamine from UDP-N-acetylglucosamine to phosphatidylinositol and participates in the first step of GPI biosynthesis. This Bos taurus (Bovine) protein is Phosphatidylinositol N-acetylglucosaminyltransferase subunit C.